Consider the following 450-residue polypeptide: MVKYFGTDGVRGIANKELTPELAFKLGRYGGYVLAHNEGADRPKVLVGRDTRVSGEMLESALISGLASIGAEVMRLGVISTPGVAYLTREMGAELGVMISASHNPVADNGIKFFGADGFKLSDAQEEEIETLLDQDNPDLPRPVGTDIVHFSDYFEGAQKYLSYLKSTIDVNLEGLKITLDGANGSTSALAPFLFGDLEADTETIGCSPDGYNINDNCGSTHPELLAEKVLETESDFGLAFDGDGDRLIAVDEKGNIIDGDQIMFVIGQEMHKNQELNNDMIVSTVMSNLGFYKALENEGIKSNKTKVGDRYVVEEMRKGNYNLGGEQSGHIVMMDYNTTGDGLLTGVQLAAVIKMSGKPLSELAAQMKKYPQSLINVKVTDKHHVEDNEDVKKVMDEVETEMNGEGRILVRPSGTEPLVRVMVEASTDEDAQRFAQRIADEVQSKMGLE.

The active-site Phosphoserine intermediate is S102. S102, D242, D244, and D246 together coordinate Mg(2+). S102 is modified (phosphoserine).

This sequence belongs to the phosphohexose mutase family. Requires Mg(2+) as cofactor. In terms of processing, activated by phosphorylation.

It catalyses the reaction alpha-D-glucosamine 1-phosphate = D-glucosamine 6-phosphate. Its function is as follows. Catalyzes the conversion of glucosamine-6-phosphate to glucosamine-1-phosphate. The sequence is that of Phosphoglucosamine mutase from Staphylococcus haemolyticus (strain JCSC1435).